A 580-amino-acid chain; its full sequence is Arginine--tRNA ligase (580 aa).

The short motif at 123–133 is the 'HIGH' region element; the sequence is PNIAKEMHVGH.

This sequence belongs to the class-I aminoacyl-tRNA synthetase family. In terms of assembly, monomer.

Its subcellular location is the cytoplasm. It carries out the reaction tRNA(Arg) + L-arginine + ATP = L-arginyl-tRNA(Arg) + AMP + diphosphate. In Buchnera aphidicola subsp. Schizaphis graminum (strain Sg), this protein is Arginine--tRNA ligase (argS).